Reading from the N-terminus, the 196-residue chain is Imidazole glycerol phosphate synthase subunit HisH (196 aa).

In terms of domain architecture, Glutamine amidotransferase type-1 spans 2 to 196 (KIIIINTNCS…EQLIKNFLEI (195 aa)). Catalysis depends on cysteine 77, which acts as the Nucleophile. Active-site residues include histidine 178 and glutamate 180.

As to quaternary structure, heterodimer of HisH and HisF.

It localises to the cytoplasm. The enzyme catalyses 5-[(5-phospho-1-deoxy-D-ribulos-1-ylimino)methylamino]-1-(5-phospho-beta-D-ribosyl)imidazole-4-carboxamide + L-glutamine = D-erythro-1-(imidazol-4-yl)glycerol 3-phosphate + 5-amino-1-(5-phospho-beta-D-ribosyl)imidazole-4-carboxamide + L-glutamate + H(+). It carries out the reaction L-glutamine + H2O = L-glutamate + NH4(+). The protein operates within amino-acid biosynthesis; L-histidine biosynthesis; L-histidine from 5-phospho-alpha-D-ribose 1-diphosphate: step 5/9. In terms of biological role, IGPS catalyzes the conversion of PRFAR and glutamine to IGP, AICAR and glutamate. The HisH subunit catalyzes the hydrolysis of glutamine to glutamate and ammonia as part of the synthesis of IGP and AICAR. The resulting ammonia molecule is channeled to the active site of HisF. This chain is Imidazole glycerol phosphate synthase subunit HisH, found in Blochmanniella floridana.